Consider the following 1113-residue polypeptide: StAR-related lipid transfer protein 13 (1113 aa).

The residue at position 1 (Met-1) is an N-acetylmethionine. In terms of domain architecture, SAM spans 55–122 (QQEIEAKEAC…LNKCASMKLD (68 aa)). Disordered regions lie at residues 162–254 (LLPR…PTRA) and 307–346 (PNGD…VSTP). Residues 177–188 (MRNTTSSESVLT) are compositionally biased toward polar residues. Composition is skewed to low complexity over residues 197–213 (SIHS…SQPG) and 326–344 (SGKS…SGVS). Phosphoserine is present on Ser-411. The span at 536 to 549 (FEGNSVSEGRTTPS) shows a compositional bias: polar residues. The tract at residues 536–580 (FEGNSVSEGRTTPSDVERDVTSLNESEPPGVRDRRDSGVGASLTR) is disordered. A Rho-GAP domain is found at 663–868 (VPLIVHVQRT…HMIMECDRLF (206 aa)). One can recognise an START domain in the interval 899-1107 (LEESGATFHT…RNSFQPLIAE (209 aa)).

In terms of assembly, homodimer. Interacts with TAX1BP1. As to expression, ubiquitously expressed. Underexpressed in hepatocellular carcinoma cells and some breast cancer cell lines.

It is found in the cytoplasm. The protein resides in the membrane. It localises to the mitochondrion membrane. Its subcellular location is the lipid droplet. In terms of biological role, GTPase-activating protein for RhoA, and perhaps for Cdc42. May be involved in regulation of cytoskeletal reorganization, cell proliferation and cell motility. Acts a tumor suppressor in hepatocellular carcinoma cells. In Homo sapiens (Human), this protein is StAR-related lipid transfer protein 13 (STARD13).